Here is a 1521-residue protein sequence, read N- to C-terminus: Retroelement silencing factor 1 (1521 aa).

A Glycyl lysine isopeptide (Lys-Gly) (interchain with G-Cter in SUMO2) cross-link involves residue K223. The segment at 621 to 640 (EKQHKPIQGDPDIADSSLGK) is disordered. Phosphoserine is present on S910. T996 carries the post-translational modification Phosphothreonine. 2 stretches are compositionally biased toward polar residues: residues 1093-1105 (KNMPFSKQASQES) and 1124-1142 (LSSNTDPCRSNTSSVQSVS). Disordered stretches follow at residues 1093-1147 (KNMP…EKKK), 1204-1230 (ERASVQEKTVPSPESSDPKGSSSKSTR), and 1312-1335 (EASRTHSVSNNNKGKFDGKQPDKM). S1142 is subject to Phosphoserine. Residues 1214 to 1228 (PSPESSDPKGSSSKS) show a composition bias toward low complexity. A compositionally biased stretch (basic and acidic residues) spans 1325-1335 (GKFDGKQPDKM). Residue K1411 forms a Glycyl lysine isopeptide (Lys-Gly) (interchain with G-Cter in SUMO2) linkage. Disordered regions lie at residues 1425 to 1444 (DKQDCPGPGPEKEQAPVQVS) and 1457 to 1485 (IPTRTKMPESSQRDSADSRLSKRSLSADE). Over residues 1467–1476 (SQRDSADSRL) the composition is skewed to basic and acidic residues. Residues S1482 and S1514 each carry the phosphoserine modification.

Interacts with SETDB1.

Its subcellular location is the nucleus. In terms of biological role, plays a role in the regulation of imprinted gene expression, regulates repressive epigenetic modifications associated with SETDB1. Required for the recruitment or accumulation of SETDB1 to the endogenous retroviruses (ERVs) and maintenance of repressive chromatin configuration, contributing to a subset of the SETDB1-dependent ERV silencing in embryonic stem cells. The polypeptide is Retroelement silencing factor 1 (Mus musculus (Mouse)).